We begin with the raw amino-acid sequence, 111 residues long: uncharacterized protein (111 aa).

The next 3 membrane-spanning stretches (helical) occupy residues 22-42 (ASLICLHTLSLVSFSFLANIT), 48-68 (LTPAGIIESIPVVFTAVVSVL), and 75-95 (VLVTVSVVLFKISLGAIPKIL).

It localises to the membrane. This is an uncharacterized protein from Saccharomyces cerevisiae (strain ATCC 204508 / S288c) (Baker's yeast).